A 117-amino-acid chain; its full sequence is Large ribosomal subunit protein bL20c (117 aa).

Belongs to the bacterial ribosomal protein bL20 family.

The protein resides in the plastid. It localises to the chloroplast. Its function is as follows. Binds directly to 23S ribosomal RNA and is necessary for the in vitro assembly process of the 50S ribosomal subunit. It is not involved in the protein synthesizing functions of that subunit. In Draba nemorosa (Woodland whitlowgrass), this protein is Large ribosomal subunit protein bL20c.